The primary structure comprises 227 residues: 7-cyano-7-deazaguanine synthase (227 aa).

8 to 18 (VSGGADSATVL) is a binding site for ATP. 4 residues coordinate Zn(2+): C192, C202, C205, and C208.

Belongs to the QueC family. It depends on Zn(2+) as a cofactor.

The enzyme catalyses 7-carboxy-7-deazaguanine + NH4(+) + ATP = 7-cyano-7-deazaguanine + ADP + phosphate + H2O + H(+). Its pathway is purine metabolism; 7-cyano-7-deazaguanine biosynthesis. In terms of biological role, catalyzes the ATP-dependent conversion of 7-carboxy-7-deazaguanine (CDG) to 7-cyano-7-deazaguanine (preQ(0)). This is 7-cyano-7-deazaguanine synthase from Rickettsia canadensis (strain McKiel).